A 468-amino-acid chain; its full sequence is Adenosylhomocysteinase (468 aa).

3 residues coordinate substrate: Thr-57, Asp-132, and Glu-194. Residue 195 to 197 (TTT) participates in NAD(+) binding. Substrate-binding residues include Lys-224 and Asp-228. NAD(+) is bound by residues Asn-229, 258 to 263 (GFGDVG), Glu-281, Asn-316, 337 to 339 (IGH), and Asn-382.

The protein belongs to the adenosylhomocysteinase family. The cofactor is NAD(+).

Its subcellular location is the cytoplasm. The catalysed reaction is S-adenosyl-L-homocysteine + H2O = L-homocysteine + adenosine. It participates in amino-acid biosynthesis; L-homocysteine biosynthesis; L-homocysteine from S-adenosyl-L-homocysteine: step 1/1. In terms of biological role, may play a key role in the regulation of the intracellular concentration of adenosylhomocysteine. This is Adenosylhomocysteinase from Methylorubrum extorquens (strain CM4 / NCIMB 13688) (Methylobacterium extorquens).